Reading from the N-terminus, the 264-residue chain is S-adenosylmethionine decarboxylase proenzyme (264 aa).

Ser-112 serves as the catalytic Schiff-base intermediate with substrate; via pyruvic acid. Ser-112 carries the post-translational modification Pyruvic acid (Ser); by autocatalysis. Residue His-117 is the Proton acceptor; for processing activity of the active site. Cys-140 (proton donor; for catalytic activity) is an active-site residue.

This sequence belongs to the prokaryotic AdoMetDC family. Type 2 subfamily. As to quaternary structure, heterooctamer of four alpha and four beta chains arranged as a tetramer of alpha/beta heterodimers. Pyruvate serves as cofactor. Is synthesized initially as an inactive proenzyme. Formation of the active enzyme involves a self-maturation process in which the active site pyruvoyl group is generated from an internal serine residue via an autocatalytic post-translational modification. Two non-identical subunits are generated from the proenzyme in this reaction, and the pyruvate is formed at the N-terminus of the alpha chain, which is derived from the carboxyl end of the proenzyme. The post-translation cleavage follows an unusual pathway, termed non-hydrolytic serinolysis, in which the side chain hydroxyl group of the serine supplies its oxygen atom to form the C-terminus of the beta chain, while the remainder of the serine residue undergoes an oxidative deamination to produce ammonia and the pyruvoyl group blocking the N-terminus of the alpha chain.

It carries out the reaction S-adenosyl-L-methionine + H(+) = S-adenosyl 3-(methylsulfanyl)propylamine + CO2. The protein operates within amine and polyamine biosynthesis; S-adenosylmethioninamine biosynthesis; S-adenosylmethioninamine from S-adenosyl-L-methionine: step 1/1. Functionally, catalyzes the decarboxylation of S-adenosylmethionine to S-adenosylmethioninamine (dcAdoMet), the propylamine donor required for the synthesis of the polyamines spermine and spermidine from the diamine putrescine. This chain is S-adenosylmethionine decarboxylase proenzyme, found in Yersinia pseudotuberculosis serotype I (strain IP32953).